Consider the following 86-residue polypeptide: Small ribosomal subunit protein bS16 (86 aa).

Belongs to the bacterial ribosomal protein bS16 family.

The polypeptide is Small ribosomal subunit protein bS16 (Bordetella avium (strain 197N)).